A 452-amino-acid chain; its full sequence is Eukaryotic translation initiation factor 3 subunit E (452 aa).

Residues 1–17 are compositionally biased toward polar residues; it reads MADNTPTTANDLLNDAT. The tract at residues 1 to 23 is disordered; that stretch reads MADNTPTTANDLLNDATQAAAKS. A PCI domain is found at 246–426; the sequence is PFFNHEPARD…GTVVMNHPPS (181 aa).

It belongs to the eIF-3 subunit E family. Component of the eukaryotic translation initiation factor 3 (eIF-3) complex.

Its subcellular location is the cytoplasm. Component of the eukaryotic translation initiation factor 3 (eIF-3) complex, which is involved in protein synthesis of a specialized repertoire of mRNAs and, together with other initiation factors, stimulates binding of mRNA and methionyl-tRNAi to the 40S ribosome. The eIF-3 complex specifically targets and initiates translation of a subset of mRNAs involved in cell proliferation. In Botryotinia fuckeliana (strain B05.10) (Noble rot fungus), this protein is Eukaryotic translation initiation factor 3 subunit E (int6).